Here is a 382-residue protein sequence, read N- to C-terminus: MNTPPFVCWIFCKVIDNFGDIGVSWRLARVLHRELGWQVHLWTDDVSALRALCPDLPDVPCVHQDIHVRTWHSDAADIDTAPVPDVVIETFACDLPENVLHIIRRHKPLWLNWEYLSAEESNERLHLMPSPQEGVQKYFWFMGFSEKSGGLIRERDYCEAVRFDTEALRERLMLPEKNASEWLLFGYRSDVWAKWLEMWRQAGSPMTLLLAGTQIIDSLKQSGVIPQDALQNDGDVFQTASVRLVKIPFVPQQDFDQLLHLADCAVIRGEDSFVRAQLAGKPFFWHIYPQDENVHLDKLHAFWDKAHGFYTPETVSAHRRLSDDLNGGEALSATQRLECWQTLQQHQNGWRQGAEDWSRYLFGQPSAPEKLAAFVSKHQKIR.

Position 18-19 (18-19 (FG)) interacts with dTDP. The active-site Proton acceptor is the D20. DTDP-beta-L-rhamnose contacts are provided by residues D20, Y187, 250–252 (VPQ), and 268–272 (RGEDS). DTDP-binding positions include Y187, 250-252 (VPQ), and 268-272 (RGEDS). E270 is a catalytic residue.

This sequence belongs to the glycosyltransferase 104 family.

The catalysed reaction is dTDP-beta-L-rhamnose + L-arginyl-[protein] = N(omega)-(alpha-L-rhamnosyl)-L-arginyl-[protein] + dTDP + H(+). In terms of biological role, protein-arginine rhamnosyltransferase that catalyzes the transfer of a single rhamnose to elongation factor P (EF-P) on 'Lys-32', a modification required for EF-P-dependent rescue of polyproline stalled ribosomes. In Neisseria meningitidis serogroup B / serotype 15 (strain H44/76), this protein is Protein-arginine rhamnosyltransferase.